The following is a 311-amino-acid chain: MIKKEIIILCGPTASGKSYLGHELAKAYGCEIINIDSMQVYREIPIITASPIQIYNTGIHYHLYNFLSITEDFSVIKYLKLASEKIREITARGKIPILIGGTGLYINLLVFGYNNIPDISQDVRVQVRNLHNEIGNIELWNKLEKLDPIAATKINHCDTQRLIRAYEVLMHTGKSIFSFHTAQKERILSDFNFKIIFLNPERKFLYKTCDERLDKIFKDKAIDEIALIKKQFTPKEYANLKAVGIKEIIAYLDGNLTLNDALNVAQMRTRQYAKRQVTWFTHQIQDKTILEYSTQEEFEQILRNLLFTLKS.

11–18 is a binding site for ATP; that stretch reads GPTASGKS. 13 to 18 serves as a coordination point for substrate; the sequence is TASGKS. Interaction with substrate tRNA regions lie at residues 36 to 39 and 160 to 164; these read DSMQ and QRLIR.

It belongs to the IPP transferase family. In terms of assembly, monomer. Mg(2+) serves as cofactor.

The catalysed reaction is adenosine(37) in tRNA + dimethylallyl diphosphate = N(6)-dimethylallyladenosine(37) in tRNA + diphosphate. Functionally, catalyzes the transfer of a dimethylallyl group onto the adenine at position 37 in tRNAs that read codons beginning with uridine, leading to the formation of N6-(dimethylallyl)adenosine (i(6)A). This Rickettsia typhi (strain ATCC VR-144 / Wilmington) protein is tRNA dimethylallyltransferase.